Here is a 106-residue protein sequence, read N- to C-terminus: Large ribosomal subunit protein uL24 (106 aa).

The protein belongs to the universal ribosomal protein uL24 family. As to quaternary structure, part of the 50S ribosomal subunit.

Its function is as follows. One of two assembly initiator proteins, it binds directly to the 5'-end of the 23S rRNA, where it nucleates assembly of the 50S subunit. In terms of biological role, one of the proteins that surrounds the polypeptide exit tunnel on the outside of the subunit. This Acidiphilium cryptum (strain JF-5) protein is Large ribosomal subunit protein uL24.